The primary structure comprises 64 residues: Conotoxin Mr3.5 (64 aa).

An N-terminal signal peptide occupies residues 1–19 (MSKLGVLLTICLLLFPLTA). Positions 20-46 (LPLDGDQPADQRAERTQAEKHSLPDPR) are excised as a propeptide. Disulfide bonds link C49–C58, C50–C62, and C54–C63. At C63 the chain carries Cysteine amide.

Belongs to the conotoxin M superfamily. In terms of tissue distribution, expressed by the venom duct.

It localises to the secreted. The chain is Conotoxin Mr3.5 from Conus marmoreus (Marble cone).